The primary structure comprises 327 residues: MPPNPTPPRRATTTTTRATSGVRRGEEEQGGMAVSASAGEEEEAFEEVDPTGRFGRYADVLGLGSVKKVYRGFDQEEGIEVAWNRVRLRALADRDPAMVERLHAEVRLLRSLHHEHIIGFHKVWLDRDAGVLNFITEVCTSGSLREYRDRHRHVSVKALKKWARQILLGLDHLHTHDPCIIHRDLNCSNVFINGNTGQVKIGDLGLAAIVDKTHVAHTILGTPEFMAPELYTETYTESVDIYSYGMCVLEMVTREMPYAECDSVVQIYHSVTRGVPPAALKRIRDPELRAFIERCIGQPRNRPSAAELLRDPFFAGIDDDDSTGTLG.

The disordered stretch occupies residues 1–48; that stretch reads MPPNPTPPRRATTTTTRATSGVRRGEEEQGGMAVSASAGEEEEAFEEV. Positions 9–19 are enriched in low complexity; sequence RRATTTTTRAT. Residues 39-48 show a composition bias toward acidic residues; that stretch reads GEEEEAFEEV. One can recognise a Protein kinase domain in the interval 55 to 314; that stretch reads GRYADVLGLG…AAELLRDPFF (260 aa). Position 136–139 (136–139) interacts with ATP; sequence TEVC. Asp203 (proton acceptor) is an active-site residue.

It belongs to the protein kinase superfamily. Ser/Thr protein kinase family. WNK subfamily.

It carries out the reaction L-seryl-[protein] + ATP = O-phospho-L-seryl-[protein] + ADP + H(+). The catalysed reaction is L-threonyl-[protein] + ATP = O-phospho-L-threonyl-[protein] + ADP + H(+). This chain is Probable serine/threonine-protein kinase WNK5 (WNK5), found in Oryza sativa subsp. japonica (Rice).